The following is a 382-amino-acid chain: MSLKEKTQSLFANAFGYPATHTIQAPGRVNLIGEHTDYNDGFVLPCAIDYQTVISCAPRDDRKVRVMAADYENQLDEFSLDAPIVAHENYQWANYVRGVVKHLQLRNNSFGGVDMVISGNVPQGAGLSSSASLEVAVGTVLQQLYHLPLDGAQIALNGQEAENQFVGCNCGIMDQLISALGKKDHALLIDCRSLGTKAVSMPKGVAVVIINSNFKRTLVGSEYNTRREQCETGARFFQQPALRDVTIEEFNAVAHELDPIVAKHVRHILTENARTVEAASALEQGDLKRMGELMAESHASMRDDFEITVPQIDTLVEIVKAVIGDKGGVRMTGGGFGGCIVALIPEELVPAVQQAVAEQYEAKTGIKETFYVCKPSQGAGQC.

Residue Glu-34–Asp-37 participates in substrate binding. Gly-124–Ser-130 lines the ATP pocket. Mg(2+) contacts are provided by Ser-130 and Glu-162. The active-site Proton acceptor is Asp-174. Tyr-223 provides a ligand contact to substrate.

This sequence belongs to the GHMP kinase family. GalK subfamily.

It is found in the cytoplasm. The enzyme catalyses alpha-D-galactose + ATP = alpha-D-galactose 1-phosphate + ADP + H(+). It functions in the pathway carbohydrate metabolism; galactose metabolism. Catalyzes the transfer of the gamma-phosphate of ATP to D-galactose to form alpha-D-galactose-1-phosphate (Gal-1-P). This is Galactokinase from Shigella dysenteriae serotype 1 (strain Sd197).